Reading from the N-terminus, the 455-residue chain is MTSKSLNVAFIHPDLGIGGAERLVVDAAVGIQKKGHQVIFYTSHHDPNHCFEETRDGTLKVQVRGDWLPRTIFGRFYILCAILRQFVLVASLILWERHSYDIFFVDQLSACVPLLKWFTTAKILFYCHFPDKLLTQRNSTIKKLYRAPVDKMEELTTGMSDLIAVNSGFTAGMFKKSFPSVHQTPQILYPPINFDAYDRPVDRNDPTVKILETDKRVLLSINRFERKKNVELALRAFAALKIKNMVPKDVFANYRLVLAGGYDKRVRENVEYLEELDQLATEEFGLQTFTIHPSSAAADVPADAQVVFLCSFNDAQRTFLLDQAKLLLYTPSNEHFGITPVEGMYASVPVIAVNTGGPVETVKNKETGLLLPSDPDVWAEGIRDFIIEKYNGKQMGQHGRQHVQSKFSLPAFADRLEAMMIELETSTPDQSSSGAVYLLGAIGVLFACIIYCIKQ.

A helical transmembrane segment spans residues 73–95 (FGRFYILCAILRQFVLVASLILW). The N-linked (GlcNAc...) asparagine glycan is linked to Asn138. A helical membrane pass occupies residues 434 to 453 (GAVYLLGAIGVLFACIIYCI).

It belongs to the glycosyltransferase group 1 family. Glycosyltransferase 4 subfamily.

It localises to the endoplasmic reticulum membrane. It catalyses the reaction a beta-D-Man-(1-&gt;4)-beta-D-GlcNAc-(1-&gt;4)-alpha-D-GlcNAc-diphospho-di-trans,poly-cis-dolichol + GDP-alpha-D-mannose = an alpha-D-Man-(1-&gt;3)-beta-D-Man-(1-&gt;4)-beta-D-GlcNAc-(1-&gt;4)-alpha-D-GlcNAc-diphospho-di-trans,poly-cis-dolichol + GDP + H(+). The catalysed reaction is an alpha-D-Man-(1-&gt;3)-beta-D-Man-(1-&gt;4)-beta-D-GlcNAc-(1-&gt;4)-alpha-D-GlcNAc-diphospho-di-trans,poly-cis-dolichol + GDP-alpha-D-mannose = an alpha-D-Man-(1-&gt;3)-[alpha-D-Man-(1-&gt;6)]-beta-D-Man-(1-&gt;4)-beta-D-GlcNAc-(1-&gt;4)-alpha-D-GlcNAc-diphospho-di-trans,poly-cis-dolichol + GDP + H(+). The protein operates within protein modification; protein glycosylation. Mannosylates Man(2)GlcNAc(2)-dolichol diphosphate and Man(1)GlcNAc(2)-dolichol diphosphate to form Man(3)GlcNAc(2)-dolichol diphosphate. The chain is Alpha-1,3/1,6-mannosyltransferase ALG2 (ALG2) from Rhizomucor pusillus.